The sequence spans 185 residues: Elongation factor P (185 aa).

The protein belongs to the elongation factor P family.

The protein resides in the cytoplasm. Its pathway is protein biosynthesis; polypeptide chain elongation. Functionally, involved in peptide bond synthesis. Stimulates efficient translation and peptide-bond synthesis on native or reconstituted 70S ribosomes in vitro. Probably functions indirectly by altering the affinity of the ribosome for aminoacyl-tRNA, thus increasing their reactivity as acceptors for peptidyl transferase. The sequence is that of Elongation factor P from Clostridium botulinum (strain Alaska E43 / Type E3).